We begin with the raw amino-acid sequence, 289 residues long: BTB/POZ domain-containing protein KCTD7 (289 aa).

The tract at residues 1–42 is disordered; it reads MVVVTGREPDSRHSDGAMSSSEAEDDFLEPATPTATQAGHGL. The 89-residue stretch at 53–141 folds into the BTB domain; the sequence is VPLNIGGAHF…YAIGPLLEQL (89 aa).

Interacts with CUL3. In terms of tissue distribution, high expression in brain, particularly in post-mitotic neurons. Expressed in the mitral cells of the olfactory bulbs, the hippocampus, the deep layers of the cerebral cortex and Purkinje cells of the cerebellum. Not detected in astrocytes or microglial cells. Also expressed in heart, liver, spleen and kidney.

Its subcellular location is the cell membrane. The protein resides in the cytoplasm. It localises to the cytosol. Its function is as follows. May be involved in the control of excitability of cortical neurons. This is BTB/POZ domain-containing protein KCTD7 (Kctd7) from Mus musculus (Mouse).